Here is a 475-residue protein sequence, read N- to C-terminus: 23S rRNA (uracil(1939)-C(5))-methyltransferase RlmD (475 aa).

Basic residues predominate over residues 1-10 (MAMLGKRRPP). Residues 1–33 (MAMLGKRRPPRTANERVRRERGSATRRDDATAD) are disordered. The segment covering 13-30 (ANERVRRERGSATRRDDA) has biased composition (basic and acidic residues). Positions 26–85 (RRDDATADGLSIERLAHDGRGVARDPHGKTVFVDQALPGERVRVAVHRQRKRFDEAHVVE) constitute a TRAM domain. The [4Fe-4S] cluster site is built by Cys98, Cys104, Cys107, and Cys183. Residues Gln294, Phe323, Asn328, Glu344, Asp371, and Asp388 each coordinate S-adenosyl-L-methionine. Catalysis depends on Cys414, which acts as the Nucleophile. Residues 455-475 (TRDTPRGRSTSVEREDHGQGP) form a disordered region. Basic and acidic residues predominate over residues 457–475 (DTPRGRSTSVEREDHGQGP).

Belongs to the class I-like SAM-binding methyltransferase superfamily. RNA M5U methyltransferase family. RlmD subfamily.

The catalysed reaction is uridine(1939) in 23S rRNA + S-adenosyl-L-methionine = 5-methyluridine(1939) in 23S rRNA + S-adenosyl-L-homocysteine + H(+). In terms of biological role, catalyzes the formation of 5-methyl-uridine at position 1939 (m5U1939) in 23S rRNA. The polypeptide is 23S rRNA (uracil(1939)-C(5))-methyltransferase RlmD (Chromohalobacter salexigens (strain ATCC BAA-138 / DSM 3043 / CIP 106854 / NCIMB 13768 / 1H11)).